Here is a 233-residue protein sequence, read N- to C-terminus: Large ribosomal subunit protein uL3 (233 aa).

The interval 145–172 (FGSQRASHGNSRSHRVPGSIGQAQDPGR) is disordered. At Gln168 the chain carries N5-methylglutamine.

Belongs to the universal ribosomal protein uL3 family. As to quaternary structure, part of the 50S ribosomal subunit. Forms a cluster with proteins L14 and L19. In terms of processing, methylated by PrmB.

In terms of biological role, one of the primary rRNA binding proteins, it binds directly near the 3'-end of the 23S rRNA, where it nucleates assembly of the 50S subunit. This chain is Large ribosomal subunit protein uL3, found in Bordetella petrii (strain ATCC BAA-461 / DSM 12804 / CCUG 43448).